We begin with the raw amino-acid sequence, 384 residues long: Tryptophan--tRNA ligase (384 aa).

The 'HIGH' region motif lies at 81 to 89 (PSGPMHIGH). The short motif at 252-256 (KMSAS) is the 'KMSKS' region element.

The protein belongs to the class-I aminoacyl-tRNA synthetase family.

The protein resides in the cytoplasm. It carries out the reaction tRNA(Trp) + L-tryptophan + ATP = L-tryptophyl-tRNA(Trp) + AMP + diphosphate + H(+). The chain is Tryptophan--tRNA ligase from Thermococcus kodakarensis (strain ATCC BAA-918 / JCM 12380 / KOD1) (Pyrococcus kodakaraensis (strain KOD1)).